The primary structure comprises 414 residues: Cyclohex-1-ene-1-carbonyl-CoA dehydrogenase (414 aa).

Aspartate 124 (proton acceptor) is an active-site residue. Residues alanine 157, threonine 158, serine 164, and threonine 190 each contribute to the FAD site. Residue serine 164 participates in cyclohex-1-ene-1-carbonyl-CoA binding. Residue serine 164 participates in cyclohexa-1,5-diene-1-carbonyl-CoA binding. The cyclohex-1-ene-1-carbonyl-CoA site is built by lysine 211, arginine 275, and threonine 396. Residues lysine 211, arginine 275, and threonine 396 each contribute to the cyclohexa-1,5-diene-1-carbonyl-CoA site. FAD contacts are provided by threonine 398 and glutamine 400. A cyclohex-1-ene-1-carbonyl-CoA-binding site is contributed by arginine 408. Arginine 408 contacts cyclohexa-1,5-diene-1-carbonyl-CoA.

It belongs to the acyl-CoA dehydrogenase family. As to quaternary structure, homotetramer. The cofactor is FAD.

The catalysed reaction is cyclohex-1-ene-1-carbonyl-CoA + oxidized [electron-transfer flavoprotein] + H(+) = cyclohexa-1,5-diene-1-carbonyl-CoA + reduced [electron-transfer flavoprotein]. Mediates the conversion of cyclohex-1-ene-1-carbonyl-CoA (Ch1CoA) into (E)-2-cyclohex-1,5-diene-1-carbonyl-CoA in biosynthesis of cyclohexane-1-carboxylate, a by-product produced during fermentation of benzoate and crotonate to acetate. Also able to further convert (E)-2-cyclohex-1,5-diene-1-carbonyl-CoA to benzoyl-CoA. The polypeptide is Cyclohex-1-ene-1-carbonyl-CoA dehydrogenase (Syntrophus aciditrophicus (strain SB)).